We begin with the raw amino-acid sequence, 357 residues long: MASSINGRKPSEIFQGQALLYRHIYAFIDSMCLKWIVELDIPNIIHNHGKPITVSELVSILKVPQTKAGNVQRIMRYMAHNGFFERVRIQEEQEENEAYALTAASELLVKGSELCLAPMVECVLDPTLSGSYHQLKKWIYEEDLTLFGVSLGSHFWEFLNENPEYNKSFNDAMASDSQMINLALRDCNSGFEGVESIVDVGGGIGTTAKIICDTFPNLKCIVFDRPKVVENLSGTNNLSYVGGDMFQSVPKADAVLLKWILHNWTDNDCRRILEKCKEAVSSDGEKGKVIIIEMVINENQDEHEITGTKLLMDVNMACLNGKERSEEEWKKLFIEAGFRDYKISPLTGFLSLIEVYP.

S-adenosyl-L-methionine is bound by residues 200–203 (VGGG), Asp224, 224–225 (DR), 244–245 (DM), and Lys258. The active-site Proton acceptor is His262.

Belongs to the class I-like SAM-binding methyltransferase superfamily. Cation-independent O-methyltransferase family. COMT subfamily.

The catalysed reaction is a 7-hydroxyisoflavone + S-adenosyl-L-methionine = a 7-methoxyisoflavone + S-adenosyl-L-homocysteine + H(+). 7-O-methyltransferase involved in the biosynthesis of isoformononetin. Can use daidzein as substrate, but not medicarpin or 2,7,4'-trihydroxyisoflavanone. The sequence is that of Isoflavone 7-O-methyltransferase (D7OMT) from Glycyrrhiza echinata (Licorice).